Here is a 199-residue protein sequence, read N- to C-terminus: Recombination protein RecR (199 aa).

The C4-type zinc finger occupies 58-73 (CSVCYGLADSDPCHIC). Positions 81–176 (DVVCVVEQGT…KITRIASGVP (96 aa)) constitute a Toprim domain.

The protein belongs to the RecR family.

Its function is as follows. May play a role in DNA repair. It seems to be involved in an RecBC-independent recombinational process of DNA repair. It may act with RecF and RecO. This is Recombination protein RecR from Desulfatibacillum aliphaticivorans.